Consider the following 311-residue polypeptide: Methionyl-tRNA formyltransferase (311 aa).

110–113 (SLLP) lines the (6S)-5,6,7,8-tetrahydrofolate pocket.

Belongs to the Fmt family.

The enzyme catalyses L-methionyl-tRNA(fMet) + (6R)-10-formyltetrahydrofolate = N-formyl-L-methionyl-tRNA(fMet) + (6S)-5,6,7,8-tetrahydrofolate + H(+). Attaches a formyl group to the free amino group of methionyl-tRNA(fMet). The formyl group appears to play a dual role in the initiator identity of N-formylmethionyl-tRNA by promoting its recognition by IF2 and preventing the misappropriation of this tRNA by the elongation apparatus. The polypeptide is Methionyl-tRNA formyltransferase (Streptococcus mutans serotype c (strain ATCC 700610 / UA159)).